A 551-amino-acid chain; its full sequence is Palmdelphin (551 aa).

Met1 carries the post-translational modification N-acetylmethionine. The stretch at 12 to 106 forms a coiled coil; sequence QAITDKRKIQ…LQISANEEVI (95 aa). Residue Lys125 forms a Glycyl lysine isopeptide (Lys-Gly) (interchain with G-Cter in SUMO2) linkage. 2 positions are modified to phosphoserine: Ser135 and Ser163. Residue Lys178 forms a Glycyl lysine isopeptide (Lys-Gly) (interchain with G-Cter in SUMO1); alternate linkage. Lys178 is covalently cross-linked (Glycyl lysine isopeptide (Lys-Gly) (interchain with G-Cter in SUMO2); alternate). The segment covering 247–258 has biased composition (basic and acidic residues); the sequence is ERNSKSPTEYHE. Residues 247-267 are disordered; that stretch reads ERNSKSPTEYHEPVYANPFCR. A Phosphothreonine modification is found at Thr270. Disordered regions lie at residues 298-387 and 452-536; these read HESE…CSSP and EDDE…DPSL. Phosphoserine is present on residues Ser322, Ser350, Ser371, Ser376, Ser385, and Ser386. The span at 484–495 shows a compositional bias: basic and acidic residues; it reads KRSEVSPHENTN. Residues Ser498, Ser515, and Ser520 each carry the phosphoserine modification.

This sequence belongs to the paralemmin family. Interacts with GLUL. Phosphorylated. In terms of tissue distribution, expressed in the brain and the spinal cord. Expressed in the anterior olfactory nucleus, the olfactory tubercle, the nucleus supraopticus, the nucleus of the lateral olfactory tract, the piriform cortex, the cortico-amygdaloid transition zone, the septofimbrial nucleus and the indusium griseum (at protein level).

The protein localises to the cytoplasm. Its subcellular location is the cell projection. It localises to the dendrite. The protein resides in the dendritic spine. The protein is Palmdelphin (Palmd) of Rattus norvegicus (Rat).